We begin with the raw amino-acid sequence, 386 residues long: N-acetylneuraminate epimerase (386 aa).

The signal sequence occupies residues 1-29 (MGMQMKNSKKMMTLMALCLSVAITTSGYA). 7 Kelch repeats span residues 51 to 95 (VIYV…VFLN), 97 to 149 (ELYV…VKLN), 151 to 186 (TMAL…RVIY), 187 to 232 (NYFN…AMEN), 235 to 284 (LTLI…LAGA), 306 to 355 (QNYT…NYGD), and 357 to 386 (IFLI…LLIE). Catalysis depends on Glu241, which acts as the Proton acceptor.

The protein belongs to the NanM family. In terms of assembly, homodimer.

Its subcellular location is the periplasm. It carries out the reaction N-acetyl-alpha-neuraminate = N-acetyl-beta-neuraminate. Its function is as follows. Converts alpha-N-acetylneuranimic acid (Neu5Ac) to the beta-anomer, accelerating the equilibrium between the alpha- and beta-anomers. Probably facilitates sialidase-negative bacteria to compete successfully for limited amounts of extracellular Neu5Ac, which is likely taken up in the beta-anomer. In addition, the rapid removal of sialic acid from solution might be advantageous to the bacterium to damp down host responses. This Salmonella arizonae (strain ATCC BAA-731 / CDC346-86 / RSK2980) protein is N-acetylneuraminate epimerase.